Reading from the N-terminus, the 563-residue chain is Efflux pump notK (563 aa).

Residues 1-32 (MTKDEDSGTTDGGYSTPDIAVQEKQDQPPAPE) form a disordered region. Transmembrane regions (helical) follow at residues 48–68 (IFLSTLLAALDIGIVATAIPG), 78–98 (DVGWYGGACFLLVGSSAPMWG), 108–128 (LVYLVSVVIFLVGSIVAAAAP), 138–158 (ALQGWGCSGTLGGSVLMISYV), 165–185 (AMLIGMWMSVFMFSTIIGPLL), 197–217 (WCFWINLPVGGPVIALVVLFF), 239–259 (LPGFALLLTSLVCLTVALQWG), 270–290 (VIATLVMWVVLTIAFFVVEWI), 312–332 (LYGWIANLANFQVLFYLPIYF), 345–365 (VNSLPFMAFFAAGSMLSGFLI), 374–394 (YEFASGVLATVGAALLYTLDI), 406–426 (VIFGIGIGLGNQVPMTALESF), 438–458 (VMLMCNSISGAYFVTAAQSIF), and 509–529 (VFAFSLAGAAFTVVLSLAIPF). The segment at 538-563 (GPSNGQEEEEGKKDGPAEKKEDEVAV) is disordered. Residues 547-563 (EGKKDGPAEKKEDEVAV) are compositionally biased toward basic and acidic residues.

The protein belongs to the major facilitator superfamily. TCR/Tet family.

The protein resides in the cell membrane. Functionally, efflux pump; part of the gene cluster that mediates the biosynthesis of notoamide, a fungal indole alkaloid that belongs to a family of natural products containing a characteristic bicyclo[2.2.2]diazaoctane core. This chain is Efflux pump notK, found in Aspergillus sp. (strain MF297-2).